Here is a 193-residue protein sequence, read N- to C-terminus: Potassium-transporting ATPase KdpC subunit (193 aa).

A helical membrane pass occupies residues 7–27 (PLVVLFVVLTAVTGLAYPAVM).

The protein belongs to the KdpC family. As to quaternary structure, the system is composed of three essential subunits: KdpA, KdpB and KdpC.

It is found in the cell inner membrane. Part of the high-affinity ATP-driven potassium transport (or Kdp) system, which catalyzes the hydrolysis of ATP coupled with the electrogenic transport of potassium into the cytoplasm. This subunit acts as a catalytic chaperone that increases the ATP-binding affinity of the ATP-hydrolyzing subunit KdpB by the formation of a transient KdpB/KdpC/ATP ternary complex. This Burkholderia orbicola (strain MC0-3) protein is Potassium-transporting ATPase KdpC subunit.